Here is a 552-residue protein sequence, read N- to C-terminus: Phosphoglucomutase (552 aa).

The Phosphoserine intermediate role is filled by S143. The Mg(2+) site is built by S143, D295, D297, and D299.

Belongs to the phosphohexose mutase family. Mg(2+) serves as cofactor.

It carries out the reaction alpha-D-glucose 1-phosphate = alpha-D-glucose 6-phosphate. The protein operates within glycolipid metabolism; diglucosyl-diacylglycerol biosynthesis. In terms of biological role, catalyzes the interconversion between glucose-6-phosphate and alpha-glucose-1-phosphate. This is the first step in the biosynthesis of diglucosyl-diacylglycerol (Glc2-DAG), i.e. the predominant glycolipid found in the S.aureus membrane, which is also used as a membrane anchor for lipoteichoic acid (LTA). The chain is Phosphoglucomutase (pgcA) from Staphylococcus aureus (strain MRSA252).